The primary structure comprises 496 residues: Sodium/sialic acid symporter SiaT (496 aa).

Residues 1–7 (MQLHDFG) are Periplasmic-facing. The chain crosses the membrane as a helical span at residues 8-29 (FINYAVLFGYLAAMLLVGVYFS). Residues 30–46 (KRQKTADDYFRGGGRVP) lie on the Cytoplasmic side of the membrane. Residues 47-59 (GWAAGVSVFATTL) traverse the membrane as a helical segment. Ala-56 is a Na(+) binding site. An N-acetyl-alpha-neuraminate-binding site is contributed by Thr-58. Residue Leu-59 coordinates Na(+). Positions 60, 63, and 82 each coordinate N-acetyl-alpha-neuraminate. The Periplasmic portion of the chain corresponds to 60–76 (SSITFMSIPAKAYTSDW). The chain crosses the membrane as a helical span at residues 77–92 (TFIIGQYLAIAILPLV). At 93-116 (FYFYIPFFRKLKITSAYEYLEARF) the chain is on the cytoplasmic side. The helical transmembrane segment at 117 to 144 (DVRSRLFASLSFMLFHIGRVAIITYLTV) threads the bilayer. An N-acetyl-alpha-neuraminate-binding site is contributed by Arg-135. Residues 145–154 (LALRPFMGID) are Periplasmic-facing. The helical transmembrane segment at 155 to 172 (PVVLIVLISLLCIIYTWM) threads the bilayer. Over 173–174 (GG) the chain is Cytoplasmic. The helical transmembrane segment at 175–199 (IEGVIWTDVIQGLLLSGGAVLIFIM) threads the bilayer. Asp-182 is a binding site for Na(+). At 200–235 (ICFKVDGGISEIFTTTAQADKFFPTTQWRWSWTDST) the chain is on the periplasmic side. Residues 236–252 (IPVLMIGFLFANIQQFT) form a helical membrane-spanning segment. At 253–272 (ASQDVVQRYIVTDSIKETKR) the chain is on the cytoplasmic side. A helical transmembrane segment spans residues 273–292 (TLITNAKLVAIIPIFFFAIG). Residues 293–325 (SALFVYYQQNPSLLPAGFNTGGILPLFIVTEMP) are Periplasmic-facing. A helical membrane pass occupies residues 326-356 (IGIAGLIIAAIFAAAQSSISSSLNSISSCFN). Na(+)-binding residues include Ala-339, Ser-342, Ser-343, Ser-345, and Ser-346. Residues 357 to 374 (SDIYTRLSKSSPSPEQKM) lie on the Cytoplasmic side of the membrane. Residues 375-396 (KVAKLVIIVAGIFSSLAAIWLV) form a helical membrane-spanning segment. Topologically, residues 397–403 (LSDEAEI) are periplasmic. A helical transmembrane segment spans residues 404–427 (WDAFNSLIGLMGGPMTGLFMLGIF). Topologically, residues 428 to 432 (VKRAN) are cytoplasmic. A helical membrane pass occupies residues 433 to 453 (AGSAVVGIIVSIIAVLAARYG). Topologically, residues 454–457 (SDLN) are periplasmic. A helical transmembrane segment spans residues 458 to 479 (FFFYGVIGSMSVVIAGTITAPL). Topologically, residues 480–496 (FAPAKQLSLDDSETSEN) are cytoplasmic.

This sequence belongs to the sodium:solute symporter (SSF) (TC 2.A.21) family.

Its subcellular location is the cell inner membrane. It catalyses the reaction N-acetyl-alpha-neuraminate(out) + 2 Na(+)(out) = N-acetyl-alpha-neuraminate(in) + 2 Na(+)(in). Both Na(+) sites regulate Neu5Ac transport. The binding energy of the second Na(+) ion may be used to allosterically stabilize the substrate without directly coordinating it. In the absence of external Na(+), the rate is reduced by 78%. Functionally, symporter that uses the Na(+) gradient as the driving force for the uptake of the sialic acid N-acetylneuraminic acid (Neu5Ac). It allows the use of host-derived Neu5Ac as an energy source by P.mirabilis. Also binds N-glycolylneuraminic acid (Neu5Gc) and ketodeoxynonulosonic acid (KDN). Shows the highest affinity for Neu5Ac and Neu5Gc, which commonly occupy the terminal non-reducing position of mammalian cell surface glycoconjugates. The sequence is that of Sodium/sialic acid symporter SiaT from Proteus mirabilis (strain HI4320).